Consider the following 375-residue polypeptide: Acetylornithine aminotransferase (375 aa).

Pyridoxal 5'-phosphate is bound by residues 102–103 (GA) and Phe-129. Position 132 (Arg-132) interacts with N(2)-acetyl-L-ornithine. 214-217 (DEVQ) is a pyridoxal 5'-phosphate binding site. Lys-243 is modified (N6-(pyridoxal phosphate)lysine). Ser-271 contributes to the N(2)-acetyl-L-ornithine binding site. Thr-272 contributes to the pyridoxal 5'-phosphate binding site.

It belongs to the class-III pyridoxal-phosphate-dependent aminotransferase family. ArgD subfamily. Homodimer. Requires pyridoxal 5'-phosphate as cofactor.

It localises to the cytoplasm. It carries out the reaction N(2)-acetyl-L-ornithine + 2-oxoglutarate = N-acetyl-L-glutamate 5-semialdehyde + L-glutamate. The protein operates within amino-acid biosynthesis; L-arginine biosynthesis; N(2)-acetyl-L-ornithine from L-glutamate: step 4/4. The protein is Acetylornithine aminotransferase of Archaeoglobus fulgidus (strain ATCC 49558 / DSM 4304 / JCM 9628 / NBRC 100126 / VC-16).